Consider the following 405-residue polypeptide: Na(+)-translocating NADH-quinone reductase subunit F (405 aa).

The helical transmembrane segment at 3 to 23 threads the bilayer; the sequence is IILGIVMFTVIVLVLALMILF. One can recognise a 2Fe-2S ferredoxin-type domain in the interval 32-124; the sequence is GDITIKVNGE…DMDIEVPEEV (93 aa). Residues cysteine 67, cysteine 73, cysteine 76, and cysteine 108 each coordinate [2Fe-2S] cluster. The region spanning 127–267 is the FAD-binding FR-type domain; the sequence is VKKWECTVIS…SGPFGEFFAK (141 aa).

It belongs to the NqrF family. Composed of six subunits; NqrA, NqrB, NqrC, NqrD, NqrE and NqrF. [2Fe-2S] cluster is required as a cofactor. It depends on FAD as a cofactor.

The protein localises to the cell inner membrane. The catalysed reaction is a ubiquinone + n Na(+)(in) + NADH + H(+) = a ubiquinol + n Na(+)(out) + NAD(+). Functionally, NQR complex catalyzes the reduction of ubiquinone-1 to ubiquinol by two successive reactions, coupled with the transport of Na(+) ions from the cytoplasm to the periplasm. The first step is catalyzed by NqrF, which accepts electrons from NADH and reduces ubiquinone-1 to ubisemiquinone by a one-electron transfer pathway. The sequence is that of Na(+)-translocating NADH-quinone reductase subunit F from Neisseria meningitidis serogroup C / serotype 2a (strain ATCC 700532 / DSM 15464 / FAM18).